The chain runs to 213 residues: Glutathione S-transferase (213 aa).

Positions A4 to P81 constitute a GST N-terminal domain. The 126-residue stretch at D86–S211 folds into the GST C-terminal domain.

This sequence belongs to the GST superfamily. Zeta family.

The protein resides in the cytoplasm. The enzyme catalyses RX + glutathione = an S-substituted glutathione + a halide anion + H(+). In terms of biological role, has a glutathione transferase activity with ethacrynic acid and nitrophenyl acetate. Has low glutathione peroxidase activity with cumene hydroperoxide. The polypeptide is Glutathione S-transferase (GSTZ1) (Triticum aestivum (Wheat)).